We begin with the raw amino-acid sequence, 279 residues long: tRNA (guanine-N(1)-)-methyltransferase (279 aa).

S-adenosyl-L-methionine contacts are provided by residues glycine 132 and 152–157 (IGDYVL).

Belongs to the RNA methyltransferase TrmD family. Homodimer.

Its subcellular location is the cytoplasm. The catalysed reaction is guanosine(37) in tRNA + S-adenosyl-L-methionine = N(1)-methylguanosine(37) in tRNA + S-adenosyl-L-homocysteine + H(+). Specifically methylates guanosine-37 in various tRNAs. The polypeptide is tRNA (guanine-N(1)-)-methyltransferase (Saccharophagus degradans (strain 2-40 / ATCC 43961 / DSM 17024)).